Reading from the N-terminus, the 416-residue chain is E3 ubiquitin-protein ligase makorin-2 (416 aa).

2 consecutive C3H1-type zinc fingers follow at residues 2 to 29 (STKQVTCRYFMHGVCREGSQCLFSHDLA) and 31 to 58 (SKPSTICKYYQKGYCAYGARCRYDHTKP). The disordered stretch occupies residues 61 to 144 (AAGGAVGPAP…DPQTSPEMKP (84 aa)). The segment covering 95–123 (HSNEPGKREKKTLVLRDRNLTGLAEDKTP) has biased composition (basic and acidic residues). A Phosphoserine modification is found at S139. Residues 165–192 (SNEPQLCPYAAAGECRFGDACVYLHGDM) form a C3H1-type 3 zinc finger. The makorin-type Cys-His stretch occupies residues 193-222 (CEICRLQVLHPFDPEQRKAHEKMCMSTFEH). An RING-type zinc finger spans residues 238–292 (CSICMEVILEKASASERRFGILSNCSHTYCLSCIRQWRCAKQFENPIIKSCPECR). The segment at 321 to 350 (GMGKKACKYFEQGKGTCPFGSKCLYRHAYP) adopts a C3H1-type 4 zinc-finger fold.

In terms of assembly, interacts with PDLIM2 (via LIM zinc-binding domain). Interacts with RELA. Highly expressed in the testis, and lower expression in the brain, thymus, heart, lung, liver, spleen, kidney, ovary, uterus, and seminal vesicle (at protein level). Expressed in primary immune cells, such as CD4-positive and CD8-positive T cells, CD19-positive B cells and CD11c-positive dendritic cells, and in embryonic fibroblasts (at protein level).

It is found in the cytoplasm. The protein localises to the nucleus. It catalyses the reaction S-ubiquitinyl-[E2 ubiquitin-conjugating enzyme]-L-cysteine + [acceptor protein]-L-lysine = [E2 ubiquitin-conjugating enzyme]-L-cysteine + N(6)-ubiquitinyl-[acceptor protein]-L-lysine.. It participates in protein modification; protein ubiquitination. In terms of biological role, E3 ubiquitin ligase catalyzing the covalent attachment of ubiquitin moieties onto substrate proteins. Promotes the polyubiquitination and proteasome-dependent degradation of RELA/p65, thereby suppressing RELA-mediated NF-kappa-B transactivation and negatively regulating inflammatory responses. Plays a role in the regulation of spermiation and in male fertility. The polypeptide is E3 ubiquitin-protein ligase makorin-2 (Mkrn2) (Mus musculus (Mouse)).